We begin with the raw amino-acid sequence, 490 residues long: Ketol-acid reductoisomerase (NADP(+)) (490 aa).

In terms of domain architecture, KARI N-terminal Rossmann spans 15–208 (INLQKCKLID…GSHHAGILHS (194 aa)). NADP(+)-binding positions include 45-48 (CGSQ), Arg68, Ser78, and 108-110 (DKQ). His132 is an active-site residue. Residue Gly158 participates in NADP(+) binding. KARI C-terminal knotted domains are found at residues 209–344 (SFIA…KCNI) and 345–484 (YYKQ…MTSM). 4 residues coordinate Mg(2+): Asp217, Glu221, Glu389, and Glu393. Ser414 contributes to the substrate binding site.

The protein belongs to the ketol-acid reductoisomerase family. Requires Mg(2+) as cofactor.

It catalyses the reaction (2R)-2,3-dihydroxy-3-methylbutanoate + NADP(+) = (2S)-2-acetolactate + NADPH + H(+). The enzyme catalyses (2R,3R)-2,3-dihydroxy-3-methylpentanoate + NADP(+) = (S)-2-ethyl-2-hydroxy-3-oxobutanoate + NADPH + H(+). Its pathway is amino-acid biosynthesis; L-isoleucine biosynthesis; L-isoleucine from 2-oxobutanoate: step 2/4. It participates in amino-acid biosynthesis; L-valine biosynthesis; L-valine from pyruvate: step 2/4. In terms of biological role, involved in the biosynthesis of branched-chain amino acids (BCAA). Catalyzes an alkyl-migration followed by a ketol-acid reduction of (S)-2-acetolactate (S2AL) to yield (R)-2,3-dihydroxy-isovalerate. In the isomerase reaction, S2AL is rearranged via a Mg-dependent methyl migration to produce 3-hydroxy-3-methyl-2-ketobutyrate (HMKB). In the reductase reaction, this 2-ketoacid undergoes a metal-dependent reduction by NADPH to yield (R)-2,3-dihydroxy-isovalerate. This chain is Ketol-acid reductoisomerase (NADP(+)), found in Buchnera aphidicola subsp. Melaphis rhois.